The following is a 220-amino-acid chain: uncharacterized protein (220 aa).

This is an uncharacterized protein from Archaeoglobus fulgidus (strain ATCC 49558 / DSM 4304 / JCM 9628 / NBRC 100126 / VC-16).